We begin with the raw amino-acid sequence, 274 residues long: Type III pantothenate kinase (274 aa).

6 to 13 lines the ATP pocket; it reads DVRNTHTV. 109-112 contributes to the substrate binding site; sequence GADR. Catalysis depends on Asp111, which acts as the Proton acceptor. Asp131 contacts K(+). Ser134 contributes to the ATP binding site. Thr186 contributes to the substrate binding site.

This sequence belongs to the type III pantothenate kinase family. Homodimer. Requires NH4(+) as cofactor. K(+) is required as a cofactor.

The protein localises to the cytoplasm. The enzyme catalyses (R)-pantothenate + ATP = (R)-4'-phosphopantothenate + ADP + H(+). It functions in the pathway cofactor biosynthesis; coenzyme A biosynthesis; CoA from (R)-pantothenate: step 1/5. Its function is as follows. Catalyzes the phosphorylation of pantothenate (Pan), the first step in CoA biosynthesis. This chain is Type III pantothenate kinase, found in Mycobacterium leprae (strain Br4923).